Reading from the N-terminus, the 214-residue chain is Non-structural protein NP-1 (214 aa).

Disordered stretches follow at residues 1-85 (MSSE…TRTN) and 192-214 (ESEE…NASN). Residues 33–43 (SRSRSPIRRHG) show a composition bias toward basic residues. Residues 44–55 (EKNLEYAHHNNQ) are compositionally biased toward basic and acidic residues. Residues 56–71 (DNRQSSYTASKTSDQA) are compositionally biased toward polar residues. Positions 192-201 (ESEEVTDEEM) are enriched in acidic residues.

Belongs to the Bocaparvovirus Non-structural protein NP-1 family.

It localises to the host nucleus. Its function is as follows. Required for the expression of the capsid proteins. Performs the splicing and internal polyadenylation of the viral capsid-encoding mRNA precursor, which allows its maturation and expression. Transactivates the viral promoter. The chain is Non-structural protein NP-1 (NP1) from Human bocavirus 4 (HBoV4).